The sequence spans 316 residues: tRNA dimethylallyltransferase (316 aa).

Residue G17–T24 coordinates ATP. T19 to T24 is a binding site for substrate. Interaction with substrate tRNA regions lie at residues D42–L45, Q166–R170, R247–R252, and K280–R287.

The protein belongs to the IPP transferase family. In terms of assembly, monomer. Mg(2+) is required as a cofactor.

It carries out the reaction adenosine(37) in tRNA + dimethylallyl diphosphate = N(6)-dimethylallyladenosine(37) in tRNA + diphosphate. Catalyzes the transfer of a dimethylallyl group onto the adenine at position 37 in tRNAs that read codons beginning with uridine, leading to the formation of N6-(dimethylallyl)adenosine (i(6)A). The polypeptide is tRNA dimethylallyltransferase (Escherichia coli O6:K15:H31 (strain 536 / UPEC)).